A 73-amino-acid polypeptide reads, in one-letter code: Translation initiation factor IF-1 (73 aa).

In terms of domain architecture, S1-like spans 1-73; that stretch reads MAKKEDTIVL…TKARVVYRHR (73 aa).

Belongs to the IF-1 family. In terms of assembly, component of the 30S ribosomal translation pre-initiation complex which assembles on the 30S ribosome in the order IF-2 and IF-3, IF-1 and N-formylmethionyl-tRNA(fMet); mRNA recruitment can occur at any time during PIC assembly.

It localises to the cytoplasm. Functionally, one of the essential components for the initiation of protein synthesis. Stabilizes the binding of IF-2 and IF-3 on the 30S subunit to which N-formylmethionyl-tRNA(fMet) subsequently binds. Helps modulate mRNA selection, yielding the 30S pre-initiation complex (PIC). Upon addition of the 50S ribosomal subunit IF-1, IF-2 and IF-3 are released leaving the mature 70S translation initiation complex. In Chlamydia muridarum (strain MoPn / Nigg), this protein is Translation initiation factor IF-1.